We begin with the raw amino-acid sequence, 103 residues long: Small ribosomal subunit protein uS10 (103 aa).

The protein belongs to the universal ribosomal protein uS10 family. As to quaternary structure, part of the 30S ribosomal subunit.

Involved in the binding of tRNA to the ribosomes. The protein is Small ribosomal subunit protein uS10 of Chlorobium limicola (strain DSM 245 / NBRC 103803 / 6330).